Reading from the N-terminus, the 218-residue chain is uncharacterized protein (218 aa).

The next 2 membrane-spanning stretches (helical) occupy residues 14-34 (CLLS…YFTS) and 175-195 (LIIP…LALV).

The protein to H.pylori HP0270.

Its subcellular location is the cell membrane. This is an uncharacterized protein from Rickettsia prowazekii (strain Madrid E).